Here is a 687-residue protein sequence, read N- to C-terminus: Cytochrome b/c1 (687 aa).

The helical transmembrane segment at 46–66 (FGAILSFMLGMQILTGVILAM) threads the bilayer. Positions 96 and 110 each coordinate heme b. A run of 2 helical transmembrane segments spans residues 126-146 (VLWI…FMGY) and 160-180 (VITN…TLLW). Heme b-binding residues include histidine 197 and histidine 211. 6 helical membrane passes run 199–219 (LLPF…HVAG), 247–267 (FGVA…PNYL), 305–325 (LAGV…PWLD), 337–357 (LAKQ…YLGA), 363–383 (IYVI…LIVL), and 410–430 (AVAS…GSLQ). Positions 404-434 (LAKGGKAVASVAIALVAAGALFLGSLQDARA) are internal signal sequence. The 186-residue stretch at 458–643 (GALQRGLKVY…TVAQYSKDVT (186 aa)) folds into the Cytochrome c domain. Positions 471, 474, 475, and 616 each coordinate heme c. A helical transmembrane segment spans residues 666 to 678 (VFLIIFAGLMYFT).

It belongs to the cytochrome b family. As to quaternary structure, the main subunits of complex b-c1 are: cytochrome b, cytochrome c1 and the Rieske protein. It depends on heme b as a cofactor. The cofactor is heme c. The protein is post-translationally processed into cytochrome b and c1. This occurs by processing between residues 434 and 435 without processing between cytochrome b and the N-terminal of the putative signal sequence domain.

The protein localises to the cell inner membrane. In terms of biological role, component of the ubiquinol-cytochrome c reductase complex (complex III or cytochrome b-c1 complex), which is a respiratory chain that generates an electrochemical potential coupled to ATP synthesis. c1 functions as an electron donor to cytochrome c. This is Cytochrome b/c1 (fbcH) from Bradyrhizobium diazoefficiens (strain JCM 10833 / BCRC 13528 / IAM 13628 / NBRC 14792 / USDA 110).